A 251-amino-acid polypeptide reads, in one-letter code: uncharacterized protein (251 aa).

This is an uncharacterized protein from Homo sapiens (Human).